The primary structure comprises 596 residues: Phosphoprotein (596 aa).

Polar residues-rich tracts occupy residues 1-11, 38-66, and 74-85; these read MENNAKDNQIM, TDSQ…QLES, and ENSGSVNENRQL. 3 disordered regions span residues 1–25, 38–196, and 220–352; these read MENN…SSDI, TDSQ…ESIS, and KNTR…EEST. Positions 33–41 are N0 binding; that stretch reads EFILSTDSQ. The span at 88–97 shows a compositional bias: basic and acidic residues; the sequence is SHERATETKN. A compositionally biased stretch (polar residues) spans 127–144; sequence ISRSSPDPNNGTQIQESI. 2 stretches are compositionally biased toward basic and acidic residues: residues 151-168 and 233-249; these read EMDK…KDVP and EDDK…EDTN. Over residues 270–324 the composition is skewed to polar residues; sequence TLKISTTTGESTRPQSGSQGKRITSWNILNSESGSRTESTSQNSQIPTSGKSNTV. The segment covering 331–352 has biased composition (basic and acidic residues); the sequence is LESRIKTQKTDGKEREDTEEST. The tract at residues 374-441 is multimerization; the sequence is LDLYQDKRVV…KMDESHRRLI (68 aa). Positions 416–436 form a coiled coil; it reads LNQIQNEILSLKTDLKKMDES. Residues 442–475 form a l protein binding region; that stretch reads ENQKEQLSLITSLISNLKIMTERGGKKDQPENSG.

The protein belongs to the respirovirus P protein family. As to quaternary structure, homotetramer. Interacts (via multimerization domain) with polymerase L; this interaction forms the polymerase complex. Interacts (via N-terminus) with N0; this interaction allows P to chaperon N0 before encapsidation and form the N-P complex. Interacts (via C-terminus) with N-RNA template; this interaction positions the polymerase on the template.

In terms of biological role, essential cofactor of the RNA polymerase L that plays a central role in the transcription and replication by forming the polymerase complex with RNA polymerase L and recruiting L to the genomic N-RNA template for RNA synthesis. Also plays a central role in the encapsidation of nascent RNA chains by forming the encapsidation complex with the nucleocapsid protein N (N-P complex). Acts as a chaperone for newly synthesized free N protein, so-called N0, allowing encapsidation of nascent RNA chains during replication. The nucleoprotein protein N prevents excessive phosphorylation of P, which leads to down-regulation of viral transcription/ replication. Participates, together with N, in the formation of viral factories (viroplasms), which are large inclusions in the host cytoplasm where replication takes place. Recruits host PI4KB and remodel the host endoplasmic reticulum membrane to form viral replication factories. This Bovine parainfluenza 3 virus (BPIV-3) protein is Phosphoprotein (P/V/D).